Reading from the N-terminus, the 731-residue chain is Polyribonucleotide nucleotidyltransferase (731 aa).

Residues aspartate 488 and aspartate 494 each coordinate Mg(2+). The KH domain maps to 555–614; sequence PRIEVINIAVDKIRDVIGSGGKVIREIVEQTGAKINIEDDGTIKIASADAKTIEAAKRWI. One can recognise an S1 motif domain in the interval 624–692; it reads GAIYQGTVVK…ERGKVRLSMK (69 aa). The disordered stretch occupies residues 693–731; the sequence is AVDQKTGKEMTDDKSVKEEKCMDEKKQPENKRRRKKKEE. Residues 694-722 show a composition bias toward basic and acidic residues; that stretch reads VDQKTGKEMTDDKSVKEEKCMDEKKQPEN.

This sequence belongs to the polyribonucleotide nucleotidyltransferase family. Mg(2+) serves as cofactor.

It is found in the cytoplasm. It carries out the reaction RNA(n+1) + phosphate = RNA(n) + a ribonucleoside 5'-diphosphate. In terms of biological role, involved in mRNA degradation. Catalyzes the phosphorolysis of single-stranded polyribonucleotides processively in the 3'- to 5'-direction. The chain is Polyribonucleotide nucleotidyltransferase from Bartonella tribocorum (strain CIP 105476 / IBS 506).